Reading from the N-terminus, the 604-residue chain is MSMLRLYTRVLQLLGGEARLGWILAFANLLLAGAQFAEPVLFGRIVDVLSGNLSTGALQTSVASPWPLLGAWVAFGLFTILCSAAVALHADRLAHRQRQAILTSYFEHIMQLPLTYHTGTHSGRLMKVMLQGTDALWRLWLGFFREHFAAILSLVVLLPLALYINWRLAILLFILCVVFTVLTTLVVHKTYSMQGEVEEQYSDLSARASDALGNVALVQSFVRIDAEVQGLRFVADRLLALQMPVLSWWALVTVITRASTTITVLAIFTVGIALHEQGLTSVGEIVMFVSFATLLIQKLEQVVSFINSVFMEAPRLQEFFNVLDAVPAVRDRPDAVDPERLQGLVEFKDVSFSYDGKRPAVADLSFTARPGETIALVGATGAGKSTAIALLHRAFDPQSGVIRIDGLDVRDLTLAGLRRNIGVVFQEALLFNRSIADNLRVGKPDATEEEMRTAASRAQALDFIERSEQKFDTNAGERGRMLSGGERQRLSIARALLKDPPILILDEATSALDAVTEAKVNLALDEVMKGRTTFVIAHRLSTIRHATRILVFEAGRVIESGTFDELLARQGHFAALARAQFMVQETSRANMAAPLEHAASAKIS.

The region spanning 21–311 (GWILAFANLL…VVSFINSVFM (291 aa)) is the ABC transmembrane type-1 domain. 6 helical membrane-spanning segments follow: residues 22-42 (WILAFANLLLAGAQFAEPVLF), 68-88 (LLGAWVAFGLFTILCSAAVAL), 146-166 (EHFAAILSLVVLLPLALYINW), 168-188 (LAILLFILCVVFTVLTTLVVH), 238-258 (LLALQMPVLSWWALVTVITRA), and 285-305 (IVMFVSFATLLIQKLEQVVSF). The region spanning 345 to 579 (VEFKDVSFSY…QGHFAALARA (235 aa)) is the ABC transporter domain. 378–385 (GATGAGKS) serves as a coordination point for ATP.

Belongs to the ABC transporter superfamily. Beta-(1--&gt;2)glucan exporter (TC 3.A.1.108.1) family. As to quaternary structure, homodimer.

Its subcellular location is the cell inner membrane. It carries out the reaction [(1-&gt;2)-beta-D-glucosyl](n)(in) + ATP + H2O = [(1-&gt;2)-beta-D-glucosyl](n)(out) + ADP + phosphate + H(+). Involved in beta-(1--&gt;2)glucan export. Transmembrane domains (TMD) form a pore in the inner membrane and the ATP-binding domain (NBD) is responsible for energy generation. In Rhodopseudomonas palustris (strain BisB18), this protein is Beta-(1--&gt;2)glucan export ATP-binding/permease protein NdvA.